A 477-amino-acid chain; its full sequence is Proline--tRNA ligase (477 aa).

This sequence belongs to the class-II aminoacyl-tRNA synthetase family. ProS type 3 subfamily. In terms of assembly, homodimer.

It is found in the cytoplasm. It carries out the reaction tRNA(Pro) + L-proline + ATP = L-prolyl-tRNA(Pro) + AMP + diphosphate. Catalyzes the attachment of proline to tRNA(Pro) in a two-step reaction: proline is first activated by ATP to form Pro-AMP and then transferred to the acceptor end of tRNA(Pro). The polypeptide is Proline--tRNA ligase (Lachnoclostridium phytofermentans (strain ATCC 700394 / DSM 18823 / ISDg) (Clostridium phytofermentans)).